A 201-amino-acid chain; its full sequence is NADH-quinone oxidoreductase subunit C (201 aa).

This sequence belongs to the complex I 30 kDa subunit family. As to quaternary structure, NDH-1 is composed of 14 different subunits. Subunits NuoB, C, D, E, F, and G constitute the peripheral sector of the complex.

It localises to the cell inner membrane. The catalysed reaction is a quinone + NADH + 5 H(+)(in) = a quinol + NAD(+) + 4 H(+)(out). In terms of biological role, NDH-1 shuttles electrons from NADH, via FMN and iron-sulfur (Fe-S) centers, to quinones in the respiratory chain. The immediate electron acceptor for the enzyme in this species is believed to be ubiquinone. Couples the redox reaction to proton translocation (for every two electrons transferred, four hydrogen ions are translocated across the cytoplasmic membrane), and thus conserves the redox energy in a proton gradient. This Ruegeria sp. (strain TM1040) (Silicibacter sp.) protein is NADH-quinone oxidoreductase subunit C.